Consider the following 178-residue polypeptide: Large ribosomal subunit protein uL5 (178 aa).

The protein belongs to the universal ribosomal protein uL5 family. Part of the 50S ribosomal subunit; part of the 5S rRNA/L5/L18/L25 subcomplex. Contacts the 5S rRNA and the P site tRNA. Forms a bridge to the 30S subunit in the 70S ribosome.

Functionally, this is one of the proteins that bind and probably mediate the attachment of the 5S RNA into the large ribosomal subunit, where it forms part of the central protuberance. In the 70S ribosome it contacts protein S13 of the 30S subunit (bridge B1b), connecting the 2 subunits; this bridge is implicated in subunit movement. Contacts the P site tRNA; the 5S rRNA and some of its associated proteins might help stabilize positioning of ribosome-bound tRNAs. This is Large ribosomal subunit protein uL5 from Syntrophomonas wolfei subsp. wolfei (strain DSM 2245B / Goettingen).